The sequence spans 356 residues: uncharacterized protein (356 aa).

The next 6 helical transmembrane spans lie at 2–22 (FEAI…FHRL), 35–55 (EYVT…PIPF), 76–96 (NMIY…FIFG), 99–119 (IIYG…GPFL), 124–144 (IISL…LALL), and 151–171 (VEIL…AITF). The 136-residue stretch at 218-353 (QSLALLLIDI…GRNKVMFNPI (136 aa)) folds into the GGDEF domain.

It localises to the cell membrane. This is an uncharacterized protein from Staphylococcus epidermidis (strain ATCC 35984 / DSM 28319 / BCRC 17069 / CCUG 31568 / BM 3577 / RP62A).